Here is a 765-residue protein sequence, read N- to C-terminus: Carboxysome assembly protein CsoS2 (765 aa).

A compositionally biased stretch (basic and acidic residues) spans 1–22; that stretch reads MSTKTSREIALERRKAMSDGGK. Disordered regions lie at residues 1–107 and 165–229; these read MSTK…RTDV and REAQ…NKNG. The interval 1–215 is N-terminal domain; the sequence is MSTKTSREIA…RSKTGSTSKQ (215 aa). One copy of the N-repeat 1 repeat lies at 7-22; it reads REIALERRKAMSDGGK. The span at 38 to 63 shows a compositional bias: polar residues; that stretch reads SQDINSTGATSSNKKVLTSPSKSNIP. The span at 77–87 shows a compositional bias: basic and acidic residues; that stretch reads SSKELGIERRK. N-repeat repeat units follow at residues 79-94, 158-173, and 196-211; these read KELG…THGK, RDIV…KHGK, and REIS…KTGS. Positions 187–207 are enriched in basic and acidic residues; the sequence is RRGDPDLSSREISQRVRELRS. The interval 216 to 586 is middle region; sequence GNGKCRPCGP…LSNCETPPND (371 aa). M-repeat repeat units follow at residues 240 to 289, 300 to 349, 358 to 397, 411 to 460, 470 to 519, and 530 to 580; these read KVGK…GQFC, RASV…KKYC, KVMQ…GDQY, KVGS…EKFC, KVGL…NDNC, and RATV…LSNC. 2 disordered regions span residues 306 to 328 and 367 to 413; these read TTSG…GDEP and GLKV…EKVG. Residues 589–734 form a C-terminal domain region; it reads YANQEKSASN…AMPPVDNKRN (146 aa). C-repeat repeat units lie at residues 604–648 and 677–711; these read SVNS…GTEQ and KKEP…EGVS. Disordered regions lie at residues 611 to 637 and 656 to 765; these read EKYS…GPFD and NMTY…GARG. The span at 730–741 shows a compositional bias: basic and acidic residues; the sequence is DNKRNDETEKPD. The segment at 735–765 is C-terminal peptide; sequence DETEKPDFLITGSSGNTRDGQLVTFSGGARG.

The protein belongs to the CsoS2 family. Probably interacts with the carboxysome major shell protein CsoS1 via the N-terminal domain. A CsoS1-CsoS1D-CsoS2 complex can be isolated following expression in E.coli. Interacts via its N-terminal repeats with RuBisCO. Post-translationally, unlike H.neapolitanus and predictions for P.marinus strain MIT 9313, this protein is not thought to have ribosomal frameshifting.

It is found in the carboxysome. Its function is as follows. Required for alpha-carboxysome (Cb) assembly, mediates interaction between RuBisCO and the Cb shell. The protein is probably highly flexible. The C-terminal repeats act as the encapsulation signal to target proteins to the Cb; they are necessary and sufficient to target both CsoS2 and foreign proteins to the Cb. The N-terminal repeats of this protein bind simultaneously to both subunits of RuBisCO. Probably also interacts with the major shell proteins (CsoS1); that interaction would increase the local concentration of CsoS2 so that it can condense RuBisCO and full carboxysomes can be formed. There are estimated to be 163 CsoS2 proteins per carboxysome; unlike H.neapolitanus only 1 form is seen. In Prochlorococcus marinus subsp. pastoris (strain CCMP1986 / NIES-2087 / MED4), this protein is Carboxysome assembly protein CsoS2.